The primary structure comprises 142 residues: UPF0332 protein PH1297 (142 aa).

Belongs to the UPF0332 family.

The sequence is that of UPF0332 protein PH1297 from Pyrococcus horikoshii (strain ATCC 700860 / DSM 12428 / JCM 9974 / NBRC 100139 / OT-3).